Consider the following 431-residue polypeptide: Serine/threonine-protein kinase Sgk1 (431 aa).

The tract at residues 1–60 (MTVKAEAARSTLTYSRMRGMVAILIAFMKQRRMGLNDFIQKIASNTYACKHAEVQSILKM) is necessary for localization to the mitochondria. The interval 65-92 (EPELMNANPSPPPSPSQQINLGPSSNPH) is disordered. Position 74 is a phosphoserine (Ser-74). Residue Ser-78 is modified to Phosphoserine; by MAPK7. The span at 81-91 (QQINLGPSSNP) shows a compositional bias: polar residues. Residues 98–355 (FHFLKVIGKG…FMEIKSHIFF (258 aa)) form the Protein kinase domain. Residues 104–112 (IGKGSFGKV) and Lys-127 each bind ATP. The Nuclear localization signal signature appears at 131-141 (KKAILKKKEEK). Catalysis depends on Asp-222, which acts as the Proton acceptor. Thr-256 is modified (phosphothreonine; by PDPK1). An AGC-kinase C-terminal domain is found at 356 to 431 (SLINWDDLIN…SYAPPVDSFL (76 aa)). Thr-369 carries the phosphothreonine; by PKA modification. Residues Ser-397, Ser-401, and Ser-422 each carry the phosphoserine modification.

This sequence belongs to the protein kinase superfamily. AGC Ser/Thr protein kinase family. As to quaternary structure, homodimer; disulfide-linked. Interacts with MAPK3/ERK1, MAPK1/ERK2, MAP2K1/MEK1, MAP2K2/MEK2, NEDD4, NEDD4L, MAPT/TAU, MAPK7, CREB1, SLC9A3R2/NHERF2 and KCNJ1/ROMK1. Forms a trimeric complex with FBXW7 and NOTCH1 Associates with the mammalian target of rapamycin complex 2 (mTORC2) via an interaction with MAPKAP1/SIN1. Post-translationally, regulated by phosphorylation. Activated by phosphorylation on Ser-422 by mTORC2, transforming it into a substrate for PDPK1 which phosphorylates it on Thr-256. Phosphorylation on Ser-397 and Ser-401 are also essential for its activity. Phosphorylation on Ser-78 by MAPK7 is required for growth factor-induced cell cycle progression. In terms of processing, ubiquitinated by NEDD4L; which promotes proteasomal degradation. Ubiquitinated by SYVN1 at the endoplasmic reticulum; which promotes rapid proteasomal degradation and maintains a high turnover rate in resting cells.

It is found in the cytoplasm. The protein localises to the nucleus. Its subcellular location is the endoplasmic reticulum membrane. The protein resides in the cell membrane. It localises to the mitochondrion. The catalysed reaction is L-seryl-[protein] + ATP = O-phospho-L-seryl-[protein] + ADP + H(+). It catalyses the reaction L-threonyl-[protein] + ATP = O-phospho-L-threonyl-[protein] + ADP + H(+). Two specific sites, one in the kinase domain (Thr-256) and the other in the C-terminal regulatory region (Ser-422), need to be phosphorylated for its full activation. Phosphorylation at Ser-397 and Ser-401 are also essential for its activity. Activated by WNK1, WNK2, WNK3 and WNK4; which promote phosphorylation by mTORC2. Serine/threonine-protein kinase which is involved in the regulation of a wide variety of ion channels, membrane transporters, cellular enzymes, transcription factors, neuronal excitability, cell growth, proliferation, survival, migration and apoptosis. Plays an important role in cellular stress response. Contributes to regulation of renal Na(+) retention, renal K(+) elimination, salt appetite, gastric acid secretion, intestinal Na(+)/H(+) exchange and nutrient transport, insulin-dependent salt sensitivity of blood pressure, salt sensitivity of peripheral glucose uptake, cardiac repolarization and memory consolidation. Up-regulates Na(+) channels: SCNN1A/ENAC, SCN5A and ASIC1/ACCN2, K(+) channels: KCNJ1/ROMK1, KCNA1-5, KCNQ1-5 and KCNE1, epithelial Ca(2+) channels: TRPV5 and TRPV6, chloride channels: BSND, CLCN2 and CFTR, glutamate transporters: SLC1A3/EAAT1, SLC1A2 /EAAT2, SLC1A1/EAAT3, SLC1A6/EAAT4 and SLC1A7/EAAT5, amino acid transporters: SLC1A5/ASCT2, SLC38A1/SN1 and SLC6A19, creatine transporter: SLC6A8, Na(+)/dicarboxylate cotransporter: SLC13A2/NADC1, Na(+)-dependent phosphate cotransporter: SLC34A2/NAPI-2B, glutamate receptor: GRIK2/GLUR6. Up-regulates carriers: SLC9A3/NHE3, SLC12A1/NKCC2, SLC12A3/NCC, SLC5A3/SMIT, SLC2A1/GLUT1, SLC5A1/SGLT1 and SLC15A2/PEPT2. Regulates enzymes: GSK3A/B, PMM2 and Na(+)/K(+) ATPase, and transcription factors: CTNNB1 and nuclear factor NF-kappa-B. Stimulates sodium transport into epithelial cells by enhancing the stability and expression of SCNN1A/ENAC. This is achieved by phosphorylating the NEDD4L ubiquitin E3 ligase, promoting its interaction with 14-3-3 proteins, thereby preventing it from binding to SCNN1A/ENAC and targeting it for degradation. Regulates store-operated Ca(+2) entry (SOCE) by stimulating ORAI1 and STIM1. Regulates KCNJ1/ROMK1 directly via its phosphorylation or indirectly via increased interaction with SLC9A3R2/NHERF2. Phosphorylates MDM2 and activates MDM2-dependent ubiquitination of p53/TP53. Phosphorylates MAPT/TAU and mediates microtubule depolymerization and neurite formation in hippocampal neurons. Phosphorylates SLC2A4/GLUT4 and up-regulates its activity. Phosphorylates APBB1/FE65 and promotes its localization to the nucleus. Phosphorylates MAPK1/ERK2 and activates it by enhancing its interaction with MAP2K1/MEK1 and MAP2K2/MEK2. Phosphorylates FBXW7 and plays an inhibitory role in the NOTCH1 signaling. Phosphorylates FOXO1 resulting in its relocalization from the nucleus to the cytoplasm. Phosphorylates FOXO3, promoting its exit from the nucleus and interference with FOXO3-dependent transcription. Phosphorylates BRAF and MAP3K3/MEKK3 and inhibits their activity. Phosphorylates SLC9A3/NHE3 in response to dexamethasone, resulting in its activation and increased localization at the cell membrane. Phosphorylates CREB1. Necessary for vascular remodeling during angiogenesis. The protein is Serine/threonine-protein kinase Sgk1 (Sgk1) of Mus musculus (Mouse).